The chain runs to 277 residues: Secoisolariciresinol dehydrogenase (277 aa).

NAD(+)-binding positions include 24–29 (GGASGI), Asp48, Val73, and Asn99. Ser163 is a binding site for substrate. Catalysis depends on Tyr166, which acts as the Proton donor/acceptor. Lys170 lines the NAD(+) pocket.

The protein belongs to the short-chain dehydrogenases/reductases (SDR) family. As to quaternary structure, homotetramer.

It catalyses the reaction (-)-secoisolariciresinol + 2 NAD(+) = (-)-matairesinol + 2 NADH + 2 H(+). Functionally, oxidoreductase involved in lignan biosynthesis. Catalyzes the stereospecific conversion of (-)-secoisolariciresinol to (-)-matairesinol via a lactol intermediate. The sequence is that of Secoisolariciresinol dehydrogenase from Forsythia intermedia (Border forsythia).